The chain runs to 190 residues: UPF0232 protein SCO3875 (190 aa).

2 disordered regions span residues 1 to 70 and 163 to 190; these read MSAD…GRDP and GPGG…DTYG. Low complexity predominate over residues 26 to 35; that stretch reads GVDLARVALR. The segment covering 36–45 has biased composition (basic and acidic residues); it reads AAREAARARG. The segment covering 163 to 172 has biased composition (gly residues); the sequence is GPGGPGGPGR.

The protein belongs to the UPF0232 family.

The polypeptide is UPF0232 protein SCO3875 (Streptomyces coelicolor (strain ATCC BAA-471 / A3(2) / M145)).